The sequence spans 262 residues: Thiazole synthase (262 aa).

The active-site Schiff-base intermediate with DXP is Lys97. Residues Gly158, 185–186 (AG), and 207–208 (NT) contribute to the 1-deoxy-D-xylulose 5-phosphate site. A disordered region spans residues 243–262 (DKAQASTPTVGQPFWHSAEY).

This sequence belongs to the ThiG family. Homotetramer. Forms heterodimers with either ThiH or ThiS.

The protein resides in the cytoplasm. The catalysed reaction is [ThiS sulfur-carrier protein]-C-terminal-Gly-aminoethanethioate + 2-iminoacetate + 1-deoxy-D-xylulose 5-phosphate = [ThiS sulfur-carrier protein]-C-terminal Gly-Gly + 2-[(2R,5Z)-2-carboxy-4-methylthiazol-5(2H)-ylidene]ethyl phosphate + 2 H2O + H(+). Its pathway is cofactor biosynthesis; thiamine diphosphate biosynthesis. In terms of biological role, catalyzes the rearrangement of 1-deoxy-D-xylulose 5-phosphate (DXP) to produce the thiazole phosphate moiety of thiamine. Sulfur is provided by the thiocarboxylate moiety of the carrier protein ThiS. In vitro, sulfur can be provided by H(2)S. The protein is Thiazole synthase of Neisseria meningitidis serogroup C (strain 053442).